Here is a 75-residue protein sequence, read N- to C-terminus: Putative defensin-like protein 271 (75 aa).

The N-terminal stretch at 1 to 23 (MTSMKLHIVALCIIVSFLVNVQS) is a signal peptide. Intrachain disulfides connect Cys-33/Cys-72, Cys-39/Cys-61, Cys-45/Cys-70, and Cys-49/Cys-71.

The protein belongs to the DEFL family.

The protein localises to the secreted. This Arabidopsis thaliana (Mouse-ear cress) protein is Putative defensin-like protein 271.